A 61-amino-acid chain; its full sequence is Protein SspF (61 aa).

Belongs to the alpha/beta-type SASP family.

Its function is as follows. May play some important role in either sporulation or the dormant spore. The sequence is that of Protein SspF (sspF) from Bacillus subtilis (strain 168).